Reading from the N-terminus, the 353-residue chain is MEPGGGHSLPVLLLLLLLLLLRPSEVNGREAPCPRPCGGRCPAEPPRCAPGVPAVLDGCGCCLVCARQRGESCSPLLPCDESGGLYCDRGPEDGGGTGICMVLEGDNCVFDGMIYRNGETFQPSCKYQCTCRDGQIGCLPRCNLGLLLPGPDCPFPRKIEVPGECCEKWVCEPRDEVLLGGFAMAAYRQEATLGIDVSDSSANCIEQTTEWSACSRSCGMGFSTRVTNRNQQCEMVKQTRLCMMRPCENEEPSDKKGKKCIRTKKSMKAVRFEYKNCTSVQTYKPRYCGLCNDGRCCTPHNTKTIQVEFRCPQGKFLKKPMMLINTCVCHGNCPQSNNAFFQPLDPMSSEAKI.

A signal peptide spans 1–26; it reads MEPGGGHSLPVLLLLLLLLLLRPSEV. Residues 29 to 103 enclose the IGFBP N-terminal domain; sequence REAPCPRPCG…GGGTGICMVL (75 aa). 6 disulfides stabilise this stretch: cysteine 33–cysteine 59, cysteine 37–cysteine 61, cysteine 41–cysteine 62, cysteine 48–cysteine 65, cysteine 73–cysteine 87, and cysteine 79–cysteine 100. A VWFC domain is found at 106-172; that stretch reads DNCVFDGMIY…GECCEKWVCE (67 aa). The TSP type-1 domain maps to 203-248; that stretch reads NCIEQTTEWSACSRSCGMGFSTRVTNRNQQCEMVKQTRLCMMRPCE. Cystine bridges form between cysteine 260-cysteine 297, cysteine 277-cysteine 311, cysteine 288-cysteine 327, cysteine 291-cysteine 329, and cysteine 296-cysteine 333. Positions 260–334 constitute a CTCK domain; that stretch reads CIRTKKSMKA…NTCVCHGNCP (75 aa). A glycan (N-linked (GlcNAc...) asparagine) is linked at asparagine 276.

It belongs to the CCN family.

The protein localises to the secreted. It localises to the cytoplasm. It is found in the cell junction. The protein resides in the gap junction. Its function is as follows. Immediate-early protein likely to play a role in cell growth regulation. In Coturnix japonica (Japanese quail), this protein is CCN family member 3 (CCN3).